The sequence spans 473 residues: MAP kinase-activated protein kinase 5 (473 aa).

The Protein kinase domain maps to 22-304 (INWTQKLGAG…IEGVLDHPWL (283 aa)). Residues 28 to 36 (LGAGISGPV) and Lys-51 contribute to the ATP site. Residue Ser-115 is modified to Phosphoserine; by PKA. The active-site Proton acceptor is Asp-148. Thr-182 carries the post-translational modification Phosphothreonine; by MAPK11, MAPK14, MAPK4, MAPK6 and PKA. Phosphoserine is present on residues Ser-212 and Ser-354. A coiled-coil region spans residues 409-440 (ENEDEKLNEVMQEAWKYNRECKLLRDTLQSFS).

This sequence belongs to the protein kinase superfamily. CAMK Ser/Thr protein kinase family. Interacts with ERK3/MAPK6 and ERK4/MAPK4 (via FRIEDE motif); the interaction is direct. Interacts with YWHAE; the interaction prevents phosphorylation of HSP27/HSPB1 leading to disrupt F-actin polymerization. Interacts with SQSTM1. Phosphorylated on Thr-182 ERK3/MAPK6 or ERK4/MAPK4; which is the regulatory phosphorylation site and is located on the T-loop/loop 12, leading to activation. Phosphorylation at Thr-182 by p38-alpha/MAPK14, p38-beta/MAPK11 is subject to debate. Phosphorylated at Ser-115 by PKA/PRKACA, leading to localization to the cytoplasm. Autophosphorylated. Expressed ubiquitously.

It is found in the cytoplasm. Its subcellular location is the nucleus. It catalyses the reaction L-seryl-[protein] + ATP = O-phospho-L-seryl-[protein] + ADP + H(+). The enzyme catalyses L-threonyl-[protein] + ATP = O-phospho-L-threonyl-[protein] + ADP + H(+). With respect to regulation, activated following phosphorylation at Thr-182 by p38-alpha/MAPK14, p38-beta/MAPK11, ERK2/MAPK1, ERK3/MAPK6, and ERK4/MAPK4. Activated by stress-related extracellular stimuli; such as H(2)O(2), arsenite, anisomycin TNF alpha and also PMA and the calcium ionophore A23187; but to a lesser extent. In vitro, activated by SQSTM1. Inhibited by diterpenoid alkaloid noroxoaconitine. Its function is as follows. Tumor suppressor serine/threonine-protein kinase involved in mTORC1 signaling and post-transcriptional regulation. Phosphorylates FOXO3, ERK3/MAPK6, ERK4/MAPK4, HSP27/HSPB1, p53/TP53 and RHEB. Acts as a tumor suppressor by mediating Ras-induced senescence and phosphorylating p53/TP53. Involved in post-transcriptional regulation of MYC by mediating phosphorylation of FOXO3: phosphorylation of FOXO3 leads to promote nuclear localization of FOXO3, enabling expression of miR-34b and miR-34c, 2 post-transcriptional regulators of MYC that bind to the 3'UTR of MYC transcript and prevent MYC translation. Acts as a negative regulator of mTORC1 signaling by mediating phosphorylation and inhibition of RHEB. Part of the atypical MAPK signaling via its interaction with ERK3/MAPK6 or ERK4/MAPK4: the precise role of the complex formed with ERK3/MAPK6 or ERK4/MAPK4 is still unclear, but the complex follows a complex set of phosphorylation events: upon interaction with atypical MAPK (ERK3/MAPK6 or ERK4/MAPK4), ERK3/MAPK6 (or ERK4/MAPK4) is phosphorylated and then mediates phosphorylation and activation of MAPKAPK5, which in turn phosphorylates ERK3/MAPK6 (or ERK4/MAPK4). Mediates phosphorylation of HSP27/HSPB1 in response to PKA/PRKACA stimulation, inducing F-actin rearrangement. In Homo sapiens (Human), this protein is MAP kinase-activated protein kinase 5 (MAPKAPK5).